A 590-amino-acid chain; its full sequence is V-type ATP synthase alpha chain (590 aa).

Residue 231–238 (GPFGSGKT) coordinates ATP.

This sequence belongs to the ATPase alpha/beta chains family.

It catalyses the reaction ATP + H2O + 4 H(+)(in) = ADP + phosphate + 5 H(+)(out). Its function is as follows. Produces ATP from ADP in the presence of a proton gradient across the membrane. The V-type alpha chain is a catalytic subunit. This is V-type ATP synthase alpha chain from Clostridium botulinum (strain Langeland / NCTC 10281 / Type F).